The sequence spans 576 residues: Type II restriction enzyme BsuRI (576 aa).

As to quaternary structure, monomer. Mg(2+) is required as a cofactor.

The enzyme catalyses Endonucleolytic cleavage of DNA to give specific double-stranded fragments with terminal 5'-phosphates.. Its function is as follows. A P subtype restriction enzyme that recognizes the double-stranded sequence 5'-GGCC-3' and cleaves after G-2. The polypeptide is Type II restriction enzyme BsuRI (hsdRR) (Bacillus subtilis).